The primary structure comprises 272 residues: MDVFKPEKLFGIIGHPLGHTMSPLLHNWGFAEHKIPAVYMAWPTEPEKVESFMQTFRNLPISGASVTIPHKLSVMDYIDQLTERAESVGAVNTLYWDGDKIVGDNTDAAGVSEPLRPYSDQIKKALLIGAGGAARAAITGLQSLGIKEIFITNRTKSKADDLAAEFKISALDWDARGDQHLDLIVNSTSLGMSGKFEEINPMIMENQDKNTIIFDLVYNPLETVLIRKAKSKGCTVIHGIEMFVHQGLEQFRLWTGIKLDEKKARELLLEKL.

Shikimate contacts are provided by residues 20-22 (TMS) and T67. The active-site Proton acceptor is K71. E83 lines the NADP(+) pocket. Shikimate is bound by residues N92 and D107. NADP(+)-binding positions include 129–133 (GAGGA), 153–158 (NRTKSK), and L216. Y218 contacts shikimate. NADP(+) is bound at residue G239.

It belongs to the shikimate dehydrogenase family. Homodimer.

It catalyses the reaction shikimate + NADP(+) = 3-dehydroshikimate + NADPH + H(+). The protein operates within metabolic intermediate biosynthesis; chorismate biosynthesis; chorismate from D-erythrose 4-phosphate and phosphoenolpyruvate: step 4/7. Its function is as follows. Involved in the biosynthesis of the chorismate, which leads to the biosynthesis of aromatic amino acids. Catalyzes the reversible NADPH linked reduction of 3-dehydroshikimate (DHSA) to yield shikimate (SA). The chain is Shikimate dehydrogenase (NADP(+)) from Maridesulfovibrio salexigens (strain ATCC 14822 / DSM 2638 / NCIMB 8403 / VKM B-1763) (Desulfovibrio salexigens).